The primary structure comprises 134 residues: U35-theraphotoxin-Cg1a (134 aa).

Positions 1-18 (MLVTLLETFSVVFQVANG) are cleaved as a signal peptide. Residues 19-56 (DGNCVPRFQDDVEFCDNYILEAVTEASKMIAPRAREQK) constitute a propeptide that is removed on maturation.

Expressed by the venom gland.

It is found in the secreted. Its function is as follows. Probable secreted venom toxin. This Chilobrachys guangxiensis (Chinese earth tiger tarantula) protein is U35-theraphotoxin-Cg1a.